A 353-amino-acid chain; its full sequence is Photosystem II protein D1 (353 aa).

Threonine 2 carries the N-acetylthreonine modification. Threonine 2 bears the Phosphothreonine mark. 3 helical membrane-spanning segments follow: residues 29-46 (YIGW…TATS), 118-133 (HFLL…EWEL), and 142-156 (WIAV…AATA). Histidine 118 is a chlorophyll a binding site. Tyrosine 126 is a binding site for pheophytin a. Aspartate 170 and glutamate 189 together coordinate [CaMn4O5] cluster. The chain crosses the membrane as a helical span at residues 197–218 (FHMLGVAGVFGGSLFSAMHGSL). Histidine 198 is a binding site for chlorophyll a. A quinone is bound by residues histidine 215 and 264–265 (SF). Residue histidine 215 coordinates Fe cation. Fe cation is bound at residue histidine 272. A helical transmembrane segment spans residues 274–288 (FLAAWPVVGIWFTAL). [CaMn4O5] cluster contacts are provided by histidine 332, glutamate 333, aspartate 342, and alanine 344. A propeptide spanning residues 345–353 (SVEAPSTNG) is cleaved from the precursor.

This sequence belongs to the reaction center PufL/M/PsbA/D family. PSII is composed of 1 copy each of membrane proteins PsbA, PsbB, PsbC, PsbD, PsbE, PsbF, PsbH, PsbI, PsbJ, PsbK, PsbL, PsbM, PsbT, PsbX, PsbY, PsbZ, Psb30/Ycf12, at least 3 peripheral proteins of the oxygen-evolving complex and a large number of cofactors. It forms dimeric complexes. The D1/D2 heterodimer binds P680, chlorophylls that are the primary electron donor of PSII, and subsequent electron acceptors. It shares a non-heme iron and each subunit binds pheophytin, quinone, additional chlorophylls, carotenoids and lipids. D1 provides most of the ligands for the Mn4-Ca-O5 cluster of the oxygen-evolving complex (OEC). There is also a Cl(-1) ion associated with D1 and D2, which is required for oxygen evolution. The PSII complex binds additional chlorophylls, carotenoids and specific lipids. serves as cofactor. Post-translationally, tyr-161 forms a radical intermediate that is referred to as redox-active TyrZ, YZ or Y-Z. C-terminally processed by CTPA; processing is essential to allow assembly of the oxygen-evolving complex and thus photosynthetic growth.

It is found in the plastid. It localises to the chloroplast thylakoid membrane. The catalysed reaction is 2 a plastoquinone + 4 hnu + 2 H2O = 2 a plastoquinol + O2. Functionally, photosystem II (PSII) is a light-driven water:plastoquinone oxidoreductase that uses light energy to abstract electrons from H(2)O, generating O(2) and a proton gradient subsequently used for ATP formation. It consists of a core antenna complex that captures photons, and an electron transfer chain that converts photonic excitation into a charge separation. The D1/D2 (PsbA/PsbD) reaction center heterodimer binds P680, the primary electron donor of PSII as well as several subsequent electron acceptors. This chain is Photosystem II protein D1, found in Acorus calamus (Sweet flag).